We begin with the raw amino-acid sequence, 242 residues long: 6-phosphogluconolactonase (242 aa).

The protein belongs to the glucosamine/galactosamine-6-phosphate isomerase family. 6-phosphogluconolactonase subfamily.

It catalyses the reaction 6-phospho-D-glucono-1,5-lactone + H2O = 6-phospho-D-gluconate + H(+). It functions in the pathway carbohydrate degradation; pentose phosphate pathway; D-ribulose 5-phosphate from D-glucose 6-phosphate (oxidative stage): step 2/3. In terms of biological role, hydrolysis of 6-phosphogluconolactone to 6-phosphogluconate. This is 6-phosphogluconolactonase (pgl) from Pseudomonas putida (Arthrobacter siderocapsulatus).